The sequence spans 375 residues: Probable mitochondrial tRNA-specific 2-thiouridylase 1 (375 aa).

ATP-binding positions include 7 to 14 (GMSGGVDS) and methionine 33. The tract at residues 94 to 96 (VPD) is interaction with target base in tRNA. The active-site Nucleophile is cysteine 99. The cysteines at positions 99 and 205 are disulfide-linked. Glycine 124 contributes to the ATP binding site. The interaction with tRNA stretch occupies residues 154-156 (KDQ). The active-site Cysteine persulfide intermediate is the cysteine 205. Residues 319 to 320 (QR) are interaction with tRNA.

Belongs to the MnmA/TRMU family.

It is found in the mitochondrion. It catalyses the reaction 5-taurinomethyluridine(34) in tRNA + S-sulfanyl-L-cysteinyl-[protein] + AH2 + ATP = 5-taurinomethyl-2-thiouridine(34) in tRNA + L-cysteinyl-[protein] + A + AMP + diphosphate + H(+). Functionally, catalyzes the 2-thiolation of uridine at the wobble position (U34) of mitochondrial tRNA(Lys), tRNA(Glu) and tRNA(Gln). Required for the formation of 5-taurinomethyl-2-thiouridine (tm5s2U) of mitochondrial tRNA(Lys), tRNA(Glu), and tRNA(Gln) at the wobble position. ATP is required to activate the C2 atom of the wobble base. The chain is Probable mitochondrial tRNA-specific 2-thiouridylase 1 from Caenorhabditis elegans.